Consider the following 288-residue polypeptide: Bifunctional protein FolD (288 aa).

Residues 165–167 (GRS) and S190 contribute to the NADP(+) site.

This sequence belongs to the tetrahydrofolate dehydrogenase/cyclohydrolase family. In terms of assembly, homodimer.

It catalyses the reaction (6R)-5,10-methylene-5,6,7,8-tetrahydrofolate + NADP(+) = (6R)-5,10-methenyltetrahydrofolate + NADPH. It carries out the reaction (6R)-5,10-methenyltetrahydrofolate + H2O = (6R)-10-formyltetrahydrofolate + H(+). Its pathway is one-carbon metabolism; tetrahydrofolate interconversion. In terms of biological role, catalyzes the oxidation of 5,10-methylenetetrahydrofolate to 5,10-methenyltetrahydrofolate and then the hydrolysis of 5,10-methenyltetrahydrofolate to 10-formyltetrahydrofolate. This chain is Bifunctional protein FolD, found in Bdellovibrio bacteriovorus (strain ATCC 15356 / DSM 50701 / NCIMB 9529 / HD100).